Consider the following 132-residue polypeptide: Ribosome-binding factor A (132 aa).

This sequence belongs to the RbfA family. In terms of assembly, monomer. Binds 30S ribosomal subunits, but not 50S ribosomal subunits or 70S ribosomes.

The protein resides in the cytoplasm. Its function is as follows. One of several proteins that assist in the late maturation steps of the functional core of the 30S ribosomal subunit. Associates with free 30S ribosomal subunits (but not with 30S subunits that are part of 70S ribosomes or polysomes). Required for efficient processing of 16S rRNA. May interact with the 5'-terminal helix region of 16S rRNA. The chain is Ribosome-binding factor A from Burkholderia cenocepacia (strain ATCC BAA-245 / DSM 16553 / LMG 16656 / NCTC 13227 / J2315 / CF5610) (Burkholderia cepacia (strain J2315)).